An 898-amino-acid polypeptide reads, in one-letter code: MAVRPGLWPALLGIVLTAWLRGSGAQQSATVANPVPGANPDLLPHFLVEPEDVYIVKNKPVLLVCKAVPATQIFFKCNGEWVRQVDHVIERSTDGSSGLPTMEVRINVSRQQVEKVFGLEEYWCQCVAWSSSGTTKSQKAYIRIAYLRKNFEQEPLAKEVSLEQGIVLPCRPPEGIPPAEVEWLRNEDLVDPSLDPNVYITREHSLVVRQARLADTANYTCVAKNIVARRRSASAAVIVYVNGGWSTWTEWSVCSASCGRGWQKRSRSCTNPAPLNGGAFCEGQNVQKTACATLCPVDGSWSPWSKWSACGLDCTHWRSRECSDPAPRNGGEECRGADLDTRNCTSDLCLHTSSGPEDVALYIGLVAVAVCLILLLLVLVLIYCRKKEGLDSDVADSSILTSGFQPVSIKPSKADNPHLLTIQPDLSTTTTTYQGSLCPRQDGPSPKFQLSNGHLLSPLGSGRHTLHHSSPTSEAEDFVSRLSTQNYFRSLPRGTSNMAYGTFNFLGGRLMIPNTGISLLIPPDAIPRGKIYEIYLTLHKPEDVRLPLAGCQTLLSPIVSCGPPGVLLTRPVILAMDHCGEPSPDSWSLRLKKQSCEGSWEDVLHLGEESPSHLYYCQLEAGACYVFTEQLGRFALVGEALSVAATKRLRLLLFAPVACTSLEYNIRVYCLHDTHDALKEVVQLEKQLGGQLIQEPRVLHFKDSYHNLRLSIHDVPSSLWKSKLLVSYQEIPFYHIWNGTQQYLHCTFTLERVNASTSDLACKVWVWQVEGDGQSFNINFNITKDTRFAEMLALESEGGVPALVGPSAFKIPFLIRQKIITSLDPPCSRGADWRTLAQKLHLDSHLSFFASKPSPTAMILNLWEARHFPNGNLGQLAAAVAGLGQPDAGLFTVSEAEC.

The N-terminal stretch at 1–25 (MAVRPGLWPALLGIVLTAWLRGSGA) is a signal peptide. Residues 26–361 (QQSATVANPV…TSSGPEDVAL (336 aa)) are Extracellular-facing. In terms of domain architecture, Ig-like spans 44–141 (PHFLVEPEDV…SGTTKSQKAY (98 aa)). 3 disulfide bridges follow: Cys-65–Cys-126, Cys-77–Cys-124, and Cys-170–Cys-221. Residues Asn-107 and Asn-218 are each glycosylated (N-linked (GlcNAc...) asparagine). An Ig-like C2-type domain is found at 155-234 (PLAKEVSLEQ…NIVARRRSAS (80 aa)). 2 consecutive TSP type-1 domains span residues 242-296 (NGGW…TLCP) and 298-350 (DGSW…DLCL). Trp-245, Trp-248, and Trp-251 each carry a C-linked (Man) tryptophan glycan. Intrachain disulfides connect Cys-254/Cys-291, Cys-258/Cys-295, and Cys-269/Cys-281. 2 C-linked (Man) tryptophan glycosylation sites follow: Trp-301 and Trp-304. 3 disulfides stabilise this stretch: Cys-310-Cys-344, Cys-314-Cys-349, and Cys-322-Cys-334. Residue Asn-343 is glycosylated (N-linked (GlcNAc...) asparagine). A helical membrane pass occupies residues 362–382 (YIGLVAVAVCLILLLLVLVLI). The Cytoplasmic portion of the chain corresponds to 383-898 (YCRKKEGLDS…GLFTVSEAEC (516 aa)). One can recognise a ZU5 domain in the interval 497 to 640 (NMAYGTFNFL…LGRFALVGEA (144 aa)). Residues 661–679 (SLEYNIRVYCLHDTHDALK) form an interaction with DCC region. One can recognise a Death domain in the interval 817 to 897 (QKIITSLDPP…AGLFTVSEAE (81 aa)).

The protein belongs to the unc-5 family. As to quaternary structure, homodimer and homooligomer. Interacts with the cytoplasmic part of DCC. Interacts with MAGED1. Interacts with PRKCABP, possibly mediating some interaction with PKC. Interacts (via extracellular domain) with FLRT2 (via extracellular domain). Interacts (via extracellular domain) with FLRT3 (via extracellular domain). Post-translationally, phosphorylated on cytoplasmic tyrosine residues. Phosphorylated by PKC in vitro. Proteolytically cleaved by caspases during apoptosis. The cleavage does not take place when the receptor is associated with netrin ligand. Its cleavage by caspases is required to induce apoptosis. In terms of processing, the two extracellular TSRs of UNC5A contain WxxWxxWxxC motifs that can be C-mannosylated on all tryptophans. DPY19L1 preferentially mannosylates the first two tryptophans and DPY19L3 prefers the third. C-mannosylation by DPY19L1 is required for transport of UNC5A from the endoplasmic reticulum to the cell surface. In terms of tissue distribution, restricted to central nervous system.

It is found in the cell membrane. It localises to the membrane raft. The protein localises to the cell projection. Its subcellular location is the neuron projection. Receptor for netrin required for axon guidance. Functions in the netrin signaling pathway and promotes neurite outgrowth in response to NTN1. Mediates axon repulsion of neuronal growth cones in the developing nervous system in response to netrin. Axon repulsion in growth cones may be mediated by its association with DCC that may trigger signaling for repulsion. It also acts as a dependence receptor required for apoptosis induction when not associated with netrin ligand. The sequence is that of Netrin receptor UNC5A (Unc5a) from Mus musculus (Mouse).